Here is a 221-residue protein sequence, read N- to C-terminus: Phosphoribosylformylglycinamidine synthase subunit PurQ (221 aa).

Residues 5-221 (TVGIVVFPGS…LYTLRSLITQ (217 aa)) enclose the Glutamine amidotransferase type-1 domain. Cys-89 functions as the Nucleophile in the catalytic mechanism. Catalysis depends on residues His-197 and Glu-199.

Part of the FGAM synthase complex composed of 1 PurL, 1 PurQ and 2 PurS subunits.

It is found in the cytoplasm. The enzyme catalyses N(2)-formyl-N(1)-(5-phospho-beta-D-ribosyl)glycinamide + L-glutamine + ATP + H2O = 2-formamido-N(1)-(5-O-phospho-beta-D-ribosyl)acetamidine + L-glutamate + ADP + phosphate + H(+). It catalyses the reaction L-glutamine + H2O = L-glutamate + NH4(+). Its pathway is purine metabolism; IMP biosynthesis via de novo pathway; 5-amino-1-(5-phospho-D-ribosyl)imidazole from N(2)-formyl-N(1)-(5-phospho-D-ribosyl)glycinamide: step 1/2. Functionally, part of the phosphoribosylformylglycinamidine synthase complex involved in the purines biosynthetic pathway. Catalyzes the ATP-dependent conversion of formylglycinamide ribonucleotide (FGAR) and glutamine to yield formylglycinamidine ribonucleotide (FGAM) and glutamate. The FGAM synthase complex is composed of three subunits. PurQ produces an ammonia molecule by converting glutamine to glutamate. PurL transfers the ammonia molecule to FGAR to form FGAM in an ATP-dependent manner. PurS interacts with PurQ and PurL and is thought to assist in the transfer of the ammonia molecule from PurQ to PurL. This Prochlorococcus marinus subsp. pastoris (strain CCMP1986 / NIES-2087 / MED4) protein is Phosphoribosylformylglycinamidine synthase subunit PurQ.